The sequence spans 392 residues: Solute carrier family 35 member B1 (392 aa).

The interval 1 to 40 (MSLTKKIKNEKSLKQEKQTDQLKSNLRNNNNNINNKSKPK) is disordered. Over residues 7–20 (IKNEKSLKQEKQTD) the composition is skewed to basic and acidic residues. Low complexity predominate over residues 25-35 (NLRNNNNNINN). A run of 9 helical transmembrane segments spans residues 57–77 (ELFF…YGLV), 97–117 (AFLL…VSLV), 124–144 (NTPF…TFLS), 155–175 (TQVL…LLLF), 179–199 (YPFL…LFML), 215–235 (HLFG…MGPF), 247–267 (ATSM…IMAF), 285–305 (VIKL…FIFL), and 341–361 (LQWA…YISY). The short motif at 389–392 (KKSL) is the Di-lysine motif element.

The protein belongs to the nucleotide-sugar transporter family. SLC35B subfamily.

It localises to the endoplasmic reticulum membrane. Functionally, probable sugar transporter. The chain is Solute carrier family 35 member B1 (slc35b1) from Dictyostelium discoideum (Social amoeba).